A 276-amino-acid chain; its full sequence is MQLNNEVALVTGGGSGLGRAIVDRFVAEGARVAVLDKSAARLQELQAAHGAKVLGIEGDVRVLADHQKAARECVAAFGKIDCLIPNAGIWDYSMPLVDIPDDRIDAAFDEVFHINVKGYLLAVKACLPALVQSRGSVVFTISNAGFYPNGGGPLYTGAKHAVVGMVRELAYELAPHVRVNGVAPGGMSTDLRGPASLGMANQAISSVPLGEMLTSVLPVGRMPVRAEYTGAYVFFATRGDTFPTTGALLNHDGGMGVRGFFEATGGKDLPQKLRLS.

Residue 9 to 33 (LVTGGGSGLGRAIVDRFVAEGARVA) participates in NAD(+) binding. Residue serine 142 coordinates substrate. Catalysis depends on tyrosine 155, which acts as the Proton acceptor.

The protein belongs to the short-chain dehydrogenases/reductases (SDR) family.

The catalysed reaction is (2R,3S)-3-phenylcyclohexa-3,5-diene-1,2-diol + NAD(+) = biphenyl-2,3-diol + NADH + H(+). Its pathway is xenobiotic degradation; biphenyl degradation; 2-hydroxy-2,4-pentadienoate and benzoate from biphenyl: step 2/4. The chain is Cis-2,3-dihydrobiphenyl-2,3-diol dehydrogenase (bphB) from Pseudomonas sp. (strain KKS102).